The chain runs to 339 residues: Heat-inducible transcription repressor HrcA (339 aa).

The protein belongs to the HrcA family.

Its function is as follows. Negative regulator of class I heat shock genes (grpE-dnaK-dnaJ and groELS operons). Prevents heat-shock induction of these operons. The chain is Heat-inducible transcription repressor HrcA from Paraburkholderia phytofirmans (strain DSM 17436 / LMG 22146 / PsJN) (Burkholderia phytofirmans).